The sequence spans 165 residues: Urease accessory protein UreE (165 aa).

A disordered region spans residues 137 to 156 (EAGAYQSAPHGHSHAHGHDH).

This sequence belongs to the UreE family.

The protein resides in the cytoplasm. Involved in urease metallocenter assembly. Binds nickel. Probably functions as a nickel donor during metallocenter assembly. This is Urease accessory protein UreE from Pseudomonas putida (strain GB-1).